Here is a 215-residue protein sequence, read N- to C-terminus: Sodium channel regulatory subunit beta-2 (215 aa).

A signal peptide spans 1–29; the sequence is MHRDAWLPRPAFSLTGLSLFFSLVPPGRS. The Extracellular segment spans residues 30–157; sequence MEVTVPATLN…MEEPPERDST (128 aa). One can recognise an Ig-like C2-type domain in the interval 32–154; it reads VTVPATLNVL…QVLMEEPPER (123 aa). N-linked (GlcNAc...) asparagine glycans are attached at residues asparagine 42, asparagine 66, and asparagine 74. 2 disulfide bridges follow: cysteine 50/cysteine 127 and cysteine 72/cysteine 75. A helical membrane pass occupies residues 158–179; it reads VAVIVGASVGGFLAVVILVLMV. At 180–215 the chain is on the cytoplasmic side; it reads VKCVRRKKEQKLSTDDLKTEEEGKTDGEGNPDDGAK. The disordered stretch occupies residues 187–215; the sequence is KEQKLSTDDLKTEEEGKTDGEGNPDDGAK. Positions 189-215 are enriched in basic and acidic residues; it reads QKLSTDDLKTEEEGKTDGEGNPDDGAK. At serine 192 the chain carries Phosphoserine. Threonine 204 carries the post-translational modification Phosphothreonine.

The protein belongs to the sodium channel auxiliary subunit SCN2B (TC 8.A.17) family. A voltage-gated sodium (Nav) channel consists of an ion-conducting pore-forming alpha subunit functional on its own that is regulated by one or more beta subunits. The beta subunit SCN2B is disulfide-linked to the pore-forming alpha subunit. Interacts with SCN1A; regulatory subunit of SCN1A/Nav1.1. Interacts with SCN2A; regulatory subunit of SCN2A/Nav1.2. Interacts with SCN3A; regulatory subunit of SCN3A/Nav1.3. Interacts with SCN5A; regulatory subunit of SCN5A/Nav1.5. Interacts with SCN8A; regulatory subunit of SCN8A/Nav1.6. Interacts with SCN9A; regulatory subunit of SCN9A/Nav1.7. Interacts with SCN10A; regulatory subunit of SCN10A/Nav1.8. Interacts with TNR; may play a crucial role in clustering and regulation of activity of SCN2B-containing Nav channels at nodes of Ranvier.

It localises to the cell membrane. Its subcellular location is the cell projection. It is found in the axon. In terms of biological role, regulatory subunit of multiple voltage-gated sodium (Nav) channels directly mediating the depolarization of excitable membranes. Navs, also called VGSCs (voltage-gated sodium channels) or VDSCs (voltage-dependent sodium channels), operate by switching between closed and open conformations depending on the voltage difference across the membrane. In the open conformation they allow Na(+) ions to selectively pass through the pore, along their electrochemical gradient. The influx of Na+ ions provokes membrane depolarization, initiating the propagation of electrical signals throughout cells and tissues. The accessory beta subunits participate in localization and functional modulation of the Nav channels. Modulates the activity of SCN1A/Nav1.1, SCN2A/Nav1.2, SCN2A/Nav1.3, SCN5A/Nav1.5, SCN8A/Nav1.6, SCN9A/Nav1.7 and SCN10A/Nav1.8. This is Sodium channel regulatory subunit beta-2 from Homo sapiens (Human).